Reading from the N-terminus, the 249-residue chain is Type III pantothenate kinase (249 aa).

8–15 lines the ATP pocket; it reads DAGNSRLK. Residues Y95 and 102–105 contribute to the substrate site; that span reads GVDR. Residue D104 is the Proton acceptor of the active site. D125 is a binding site for K(+). Residue T128 participates in ATP binding. Position 179 (T179) interacts with substrate.

This sequence belongs to the type III pantothenate kinase family. In terms of assembly, homodimer. Requires NH4(+) as cofactor. K(+) serves as cofactor.

Its subcellular location is the cytoplasm. The catalysed reaction is (R)-pantothenate + ATP = (R)-4'-phosphopantothenate + ADP + H(+). It participates in cofactor biosynthesis; coenzyme A biosynthesis; CoA from (R)-pantothenate: step 1/5. In terms of biological role, catalyzes the phosphorylation of pantothenate (Pan), the first step in CoA biosynthesis. The sequence is that of Type III pantothenate kinase from Alkalilimnicola ehrlichii (strain ATCC BAA-1101 / DSM 17681 / MLHE-1).